The primary structure comprises 927 residues: Probable RNA-dependent RNA polymerase 4 (927 aa).

The interval Gly98 to Asp135 is disordered. Residues Ser121–Asp135 show a composition bias toward basic and acidic residues.

This sequence belongs to the RdRP family.

The catalysed reaction is RNA(n) + a ribonucleoside 5'-triphosphate = RNA(n+1) + diphosphate. Functionally, probably involved in the RNA silencing pathway and required for the generation of small interfering RNAs (siRNAs). The protein is Probable RNA-dependent RNA polymerase 4 (RDR4) of Arabidopsis thaliana (Mouse-ear cress).